The primary structure comprises 315 residues: 4-hydroxy-3-methylbut-2-enyl diphosphate reductase (315 aa).

Residue C12 participates in [4Fe-4S] cluster binding. 2 residues coordinate (2E)-4-hydroxy-3-methylbut-2-enyl diphosphate: H41 and H74. Positions 41 and 74 each coordinate dimethylallyl diphosphate. Isopentenyl diphosphate contacts are provided by H41 and H74. Position 96 (C96) interacts with [4Fe-4S] cluster. H124 contributes to the (2E)-4-hydroxy-3-methylbut-2-enyl diphosphate binding site. Position 124 (H124) interacts with dimethylallyl diphosphate. H124 is an isopentenyl diphosphate binding site. E126 functions as the Proton donor in the catalytic mechanism. T168 provides a ligand contact to (2E)-4-hydroxy-3-methylbut-2-enyl diphosphate. C198 serves as a coordination point for [4Fe-4S] cluster. The (2E)-4-hydroxy-3-methylbut-2-enyl diphosphate site is built by S226, S227, N228, and S270. S226, S227, N228, and S270 together coordinate dimethylallyl diphosphate. 4 residues coordinate isopentenyl diphosphate: S226, S227, N228, and S270.

Belongs to the IspH family. Requires [4Fe-4S] cluster as cofactor.

The catalysed reaction is isopentenyl diphosphate + 2 oxidized [2Fe-2S]-[ferredoxin] + H2O = (2E)-4-hydroxy-3-methylbut-2-enyl diphosphate + 2 reduced [2Fe-2S]-[ferredoxin] + 2 H(+). It carries out the reaction dimethylallyl diphosphate + 2 oxidized [2Fe-2S]-[ferredoxin] + H2O = (2E)-4-hydroxy-3-methylbut-2-enyl diphosphate + 2 reduced [2Fe-2S]-[ferredoxin] + 2 H(+). It participates in isoprenoid biosynthesis; dimethylallyl diphosphate biosynthesis; dimethylallyl diphosphate from (2E)-4-hydroxy-3-methylbutenyl diphosphate: step 1/1. Its pathway is isoprenoid biosynthesis; isopentenyl diphosphate biosynthesis via DXP pathway; isopentenyl diphosphate from 1-deoxy-D-xylulose 5-phosphate: step 6/6. Functionally, catalyzes the conversion of 1-hydroxy-2-methyl-2-(E)-butenyl 4-diphosphate (HMBPP) into a mixture of isopentenyl diphosphate (IPP) and dimethylallyl diphosphate (DMAPP). Acts in the terminal step of the DOXP/MEP pathway for isoprenoid precursor biosynthesis. The protein is 4-hydroxy-3-methylbut-2-enyl diphosphate reductase of Pseudomonas fluorescens (strain ATCC BAA-477 / NRRL B-23932 / Pf-5).